Reading from the N-terminus, the 425-residue chain is uncharacterized protein (425 aa).

This is an uncharacterized protein from Salmonella typhimurium (strain LT2 / SGSC1412 / ATCC 700720).